The chain runs to 603 residues: Elongation factor 4 (603 aa).

In terms of domain architecture, tr-type G spans 7-189; it reads VRIRNFCIIA…AVVERVPPPP (183 aa). Residues 19–24 and 136–139 contribute to the GTP site; these read DHGKST and NKID.

This sequence belongs to the TRAFAC class translation factor GTPase superfamily. Classic translation factor GTPase family. LepA subfamily.

Its subcellular location is the cell inner membrane. The enzyme catalyses GTP + H2O = GDP + phosphate + H(+). Its function is as follows. Required for accurate and efficient protein synthesis under certain stress conditions. May act as a fidelity factor of the translation reaction, by catalyzing a one-codon backward translocation of tRNAs on improperly translocated ribosomes. Back-translocation proceeds from a post-translocation (POST) complex to a pre-translocation (PRE) complex, thus giving elongation factor G a second chance to translocate the tRNAs correctly. Binds to ribosomes in a GTP-dependent manner. The polypeptide is Elongation factor 4 (Nostoc sp. (strain PCC 7120 / SAG 25.82 / UTEX 2576)).